The following is a 300-amino-acid chain: Pantoate--beta-alanine ligase (300 aa).

43–50 (MGYLHSGH) is a binding site for ATP. Catalysis depends on His-50, which acts as the Proton donor. Gln-74 contributes to the (R)-pantoate binding site. Beta-alanine is bound at residue Gln-74. An ATP-binding site is contributed by 162-165 (GQKD). Gln-168 is a (R)-pantoate binding site. Residues Ile-191 and 199 to 202 (KSSR) each bind ATP.

Belongs to the pantothenate synthetase family. As to quaternary structure, homodimer.

The protein resides in the cytoplasm. It catalyses the reaction (R)-pantoate + beta-alanine + ATP = (R)-pantothenate + AMP + diphosphate + H(+). Its pathway is cofactor biosynthesis; (R)-pantothenate biosynthesis; (R)-pantothenate from (R)-pantoate and beta-alanine: step 1/1. Catalyzes the condensation of pantoate with beta-alanine in an ATP-dependent reaction via a pantoyl-adenylate intermediate. The chain is Pantoate--beta-alanine ligase (panC) from Dictyostelium discoideum (Social amoeba).